A 362-amino-acid polypeptide reads, in one-letter code: Phospho-N-acetylmuramoyl-pentapeptide-transferase (362 aa).

10 helical membrane passes run 27-47, 73-93, 97-117, 132-152, 160-180, 200-220, 237-257, 264-284, 289-309, and 339-359; these read VMAA…VIRW, TMGG…WGDL, YVWV…VDDW, WKYL…GLTA, LIVP…FVAL, GLAI…AYVA, AGEL…FLWF, VFMG…VAVV, IVLF…MVQV, and QVVV…LSTL.

It belongs to the glycosyltransferase 4 family. MraY subfamily. Mg(2+) is required as a cofactor.

Its subcellular location is the cell inner membrane. The catalysed reaction is UDP-N-acetyl-alpha-D-muramoyl-L-alanyl-gamma-D-glutamyl-meso-2,6-diaminopimeloyl-D-alanyl-D-alanine + di-trans,octa-cis-undecaprenyl phosphate = di-trans,octa-cis-undecaprenyl diphospho-N-acetyl-alpha-D-muramoyl-L-alanyl-D-glutamyl-meso-2,6-diaminopimeloyl-D-alanyl-D-alanine + UMP. It functions in the pathway cell wall biogenesis; peptidoglycan biosynthesis. Functionally, catalyzes the initial step of the lipid cycle reactions in the biosynthesis of the cell wall peptidoglycan: transfers peptidoglycan precursor phospho-MurNAc-pentapeptide from UDP-MurNAc-pentapeptide onto the lipid carrier undecaprenyl phosphate, yielding undecaprenyl-pyrophosphoryl-MurNAc-pentapeptide, known as lipid I. This chain is Phospho-N-acetylmuramoyl-pentapeptide-transferase, found in Aromatoleum aromaticum (strain DSM 19018 / LMG 30748 / EbN1) (Azoarcus sp. (strain EbN1)).